We begin with the raw amino-acid sequence, 505 residues long: Trans-cinnamate 4-monooxygenase (505 aa).

Residues 3 to 23 (LLLIEKTLVALFAAIIGAILI) form a helical membrane-spanning segment. Residues 213 to 218 (RSRLAQ) and A306 each bind (E)-cinnamate. C447 lines the heme pocket.

Belongs to the cytochrome P450 family. It depends on heme as a cofactor.

The protein resides in the membrane. It catalyses the reaction (E)-cinnamate + reduced [NADPH--hemoprotein reductase] + O2 = (E)-4-coumarate + oxidized [NADPH--hemoprotein reductase] + H2O + H(+). It functions in the pathway phenylpropanoid metabolism; trans-4-coumarate biosynthesis; trans-4-coumarate from trans-cinnamate: step 1/1. Inactivated by piperonylic acid. Its function is as follows. Catalyzes the first oxidative step of the phenylpropanoid pathway in higher plants by transforming trans-cinnamate into p-coumarate. The compounds formed by this pathway are essential components for lignification, pollination, and defense against ultraviolet light, predators and pathogens. Can also use 2-naphthoic acid as substrate. The polypeptide is Trans-cinnamate 4-monooxygenase (Helianthus tuberosus (Jerusalem artichoke)).